We begin with the raw amino-acid sequence, 392 residues long: Formate-dependent phosphoribosylglycinamide formyltransferase (392 aa).

Residues 22–23 (EL) and glutamate 82 each bind N(1)-(5-phospho-beta-D-ribosyl)glycinamide. ATP contacts are provided by residues arginine 114, lysine 155, 160–165 (SSGKGQ), 195–198 (EGVV), and glutamate 203. The 190-residue stretch at 119 to 308 (RLAAEELWVP…EFALHVRAFL (190 aa)) folds into the ATP-grasp domain. The Mg(2+) site is built by glutamate 267 and glutamate 279. Residues aspartate 286, lysine 355, and 362-363 (RR) contribute to the N(1)-(5-phospho-beta-D-ribosyl)glycinamide site.

The protein belongs to the PurK/PurT family. In terms of assembly, homodimer.

It carries out the reaction N(1)-(5-phospho-beta-D-ribosyl)glycinamide + formate + ATP = N(2)-formyl-N(1)-(5-phospho-beta-D-ribosyl)glycinamide + ADP + phosphate + H(+). Its pathway is purine metabolism; IMP biosynthesis via de novo pathway; N(2)-formyl-N(1)-(5-phospho-D-ribosyl)glycinamide from N(1)-(5-phospho-D-ribosyl)glycinamide (formate route): step 1/1. Involved in the de novo purine biosynthesis. Catalyzes the transfer of formate to 5-phospho-ribosyl-glycinamide (GAR), producing 5-phospho-ribosyl-N-formylglycinamide (FGAR). Formate is provided by PurU via hydrolysis of 10-formyl-tetrahydrofolate. This Erwinia tasmaniensis (strain DSM 17950 / CFBP 7177 / CIP 109463 / NCPPB 4357 / Et1/99) protein is Formate-dependent phosphoribosylglycinamide formyltransferase.